Here is a 195-residue protein sequence, read N- to C-terminus: Pyridoxal 5'-phosphate synthase subunit PdxT (195 aa).

46–48 contacts L-glutamine; that stretch reads GES. The Nucleophile role is filled by Cys-78. L-glutamine contacts are provided by residues Arg-105 and 133–134; that span reads IR. Active-site charge relay system residues include His-169 and Glu-171.

Belongs to the glutaminase PdxT/SNO family. As to quaternary structure, in the presence of PdxS, forms a dodecamer of heterodimers. Only shows activity in the heterodimer.

The enzyme catalyses aldehydo-D-ribose 5-phosphate + D-glyceraldehyde 3-phosphate + L-glutamine = pyridoxal 5'-phosphate + L-glutamate + phosphate + 3 H2O + H(+). It carries out the reaction L-glutamine + H2O = L-glutamate + NH4(+). It participates in cofactor biosynthesis; pyridoxal 5'-phosphate biosynthesis. Functionally, catalyzes the hydrolysis of glutamine to glutamate and ammonia as part of the biosynthesis of pyridoxal 5'-phosphate. The resulting ammonia molecule is channeled to the active site of PdxS. In Shouchella clausii (strain KSM-K16) (Alkalihalobacillus clausii), this protein is Pyridoxal 5'-phosphate synthase subunit PdxT.